Here is a 37-residue protein sequence, read N- to C-terminus: NYCYYMVDYLTFYNIKNYKIYTYAQRLLEIYFSYLSI.

In Plasmodium chabaudi, this protein is 24 kDa antigen.